A 1435-amino-acid chain; its full sequence is Trafficking protein particle complex subunit 8 (1435 aa).

Phosphoserine is present on residues serine 273, serine 279, and serine 309. Residues 301-321 (QLEQSSDPSNSIDGPDHLRSA) form a disordered region. The span at 302–312 (LEQSSDPSNSI) shows a compositional bias: polar residues.

It belongs to the TRS85 family. In terms of assembly, component of the multisubunit TRAPP (transport protein particle) complex, which includes TRAPPC2, TRAPPC2L, TRAPPC3, TRAPPC3L, TRAPPC4, TRAPPC5, TRAPPC8, TRAPPC9, TRAPPC10, TRAPPC11 and TRAPPC12. Interacts with TBC1D14. Interacts (via C-terminus) with TMEM131 (via C-terminus); the interaction is direct and is involved in collagen secretion.

The protein resides in the golgi apparatus. Its subcellular location is the cis-Golgi network. Functionally, plays a role in endoplasmic reticulum to Golgi apparatus trafficking at a very early stage. Maintains together with TBC1D14 the cycling pool of ATG9 required for initiation of autophagy. Involved in collagen secretion. The protein is Trafficking protein particle complex subunit 8 (TRAPPC8) of Homo sapiens (Human).